Consider the following 714-residue polypeptide: Polyribonucleotide nucleotidyltransferase (714 aa).

Residues Asp-488 and Asp-494 each coordinate Mg(2+). The KH domain occupies 555 to 614 (PRIEVMNIPTDKIRDVIGSGGKVIREIVEKTGAKINIEDDGTVKIASSNGKEIEAAKKWI). Residues 624 to 692 (GEIYEGTVVK…ERGKVRLSMK (69 aa)) enclose the S1 motif domain.

The protein belongs to the polyribonucleotide nucleotidyltransferase family. Requires Mg(2+) as cofactor.

It is found in the cytoplasm. It catalyses the reaction RNA(n+1) + phosphate = RNA(n) + a ribonucleoside 5'-diphosphate. Its function is as follows. Involved in mRNA degradation. Catalyzes the phosphorolysis of single-stranded polyribonucleotides processively in the 3'- to 5'-direction. The chain is Polyribonucleotide nucleotidyltransferase from Brucella abortus biovar 1 (strain 9-941).